The primary structure comprises 134 residues: Small ribosomal subunit protein uS11 (134 aa).

The segment covering 113–122 (SSITDATPQP) has biased composition (polar residues). Residues 113–134 (SSITDATPQPHNGCRPTKRRKV) form a disordered region.

This sequence belongs to the universal ribosomal protein uS11 family. In terms of assembly, part of the 30S ribosomal subunit. Interacts with proteins S7 and S18. Binds to IF-3.

Located on the platform of the 30S subunit, it bridges several disparate RNA helices of the 16S rRNA. Forms part of the Shine-Dalgarno cleft in the 70S ribosome. The polypeptide is Small ribosomal subunit protein uS11 (Corynebacterium aurimucosum (strain ATCC 700975 / DSM 44827 / CIP 107346 / CN-1) (Corynebacterium nigricans)).